A 134-amino-acid polypeptide reads, in one-letter code: Late embryogenesis abundant protein 6 (134 aa).

Over residues E31–H45 the composition is skewed to basic and acidic residues. Disordered regions lie at residues E31 to A53 and V80 to Y134. The stretch at M34–K70 forms a coiled coil. Positions P115–G127 are enriched in low complexity.

Belongs to the LEA type 1 family.

Its function is as follows. Involved dehydration tolerance. Involved in the adaptive response of vascular plants to withstand water deficit. May possess chaperone-like activity under water deficit. The sequence is that of Late embryogenesis abundant protein 6 from Arabidopsis thaliana (Mouse-ear cress).